We begin with the raw amino-acid sequence, 475 residues long: Aspartyl/glutamyl-tRNA(Asn/Gln) amidotransferase subunit B (475 aa).

The protein belongs to the GatB/GatE family. GatB subfamily. As to quaternary structure, heterotrimer of A, B and C subunits.

It carries out the reaction L-glutamyl-tRNA(Gln) + L-glutamine + ATP + H2O = L-glutaminyl-tRNA(Gln) + L-glutamate + ADP + phosphate + H(+). The enzyme catalyses L-aspartyl-tRNA(Asn) + L-glutamine + ATP + H2O = L-asparaginyl-tRNA(Asn) + L-glutamate + ADP + phosphate + 2 H(+). Functionally, allows the formation of correctly charged Asn-tRNA(Asn) or Gln-tRNA(Gln) through the transamidation of misacylated Asp-tRNA(Asn) or Glu-tRNA(Gln) in organisms which lack either or both of asparaginyl-tRNA or glutaminyl-tRNA synthetases. The reaction takes place in the presence of glutamine and ATP through an activated phospho-Asp-tRNA(Asn) or phospho-Glu-tRNA(Gln). The sequence is that of Aspartyl/glutamyl-tRNA(Asn/Gln) amidotransferase subunit B from Bacillus cereus (strain ATCC 10987 / NRS 248).